We begin with the raw amino-acid sequence, 552 residues long: Hyaluronan synthase 2 (552 aa).

At methionine 1–arginine 11 the chain is on the cytoplasmic side. A helical transmembrane segment spans residues isoleucine 12–valine 32. Over glycine 33–serine 45 the chain is Extracellular. Residues phenylalanine 46–leucine 66 traverse the membrane as a helical segment. Residues glutamate 67–leucine 374 are Cytoplasmic-facing. A Phosphothreonine modification is found at threonine 110. Lysine 190 participates in a covalent cross-link: Glycyl lysine isopeptide (Lys-Gly) (interchain with G-Cter in ubiquitin). O-linked (GlcNAc) serine glycosylation is present at serine 221. Phosphothreonine is present on threonine 328. Residues tryptophan 375–isoleucine 395 form a helical membrane-spanning segment. Residues glutamine 396 to lysine 402 are Extracellular-facing. Residues isoleucine 403 to phenylalanine 423 traverse the membrane as a helical segment. Residues alanine 424 to glycine 429 are Cytoplasmic-facing. Residues asparagine 430–alanine 450 form a helical membrane-spanning segment. At lysine 451 to phenylalanine 475 the chain is on the extracellular side. Residues isoleucine 476–isoleucine 496 traverse the membrane as a helical segment. Residues tyrosine 497–threonine 510 lie on the Cytoplasmic side of the membrane. Residues valine 511–valine 531 traverse the membrane as a helical segment. Residues valine 532–valine 552 are Extracellular-facing.

Belongs to the NodC/HAS family. As to quaternary structure, homodimer; dimerization promotes enzymatic activity. Forms heterodimer with HAS3. Forms heterodimer with HAS1. Mg(2+) is required as a cofactor. Post-translationally, phosphorylation at Thr-328 is essential for hyaluronan synthase activity. In terms of processing, O-GlcNAcylation at Ser-221 increases the stability of HAS2 and plasma membrane localization. Ubiquitination at Lys-190; this ubiquitination is essential for hyaluronan synthase activity and homo- or hetero-oligomerization. Can also be poly-ubiquitinated. Deubiquitinated by USP17L22/USP17 and USP4. USP17L22/USP17 efficiently removes 'Lys-63'- and 'Lys-48'-linked polyubiquitin chains, whereas USP4 preferentially removes monoubiquitination and, partially, both 'Lys-63'- and 'Lys-48'-linked polyubiquitin chain.

The protein resides in the cell membrane. It localises to the endoplasmic reticulum membrane. Its subcellular location is the vesicle. The protein localises to the golgi apparatus membrane. It is found in the lysosome. It catalyses the reaction [hyaluronan](n) + UDP-N-acetyl-alpha-D-glucosamine = N-acetyl-beta-D-glucosaminyl-(1-&gt;4)-[hyaluronan](n) + UDP + H(+). It carries out the reaction N-acetyl-beta-D-glucosaminyl-(1-&gt;4)-[hyaluronan](n) + UDP-alpha-D-glucuronate = [hyaluronan](n+1) + UDP + H(+). It participates in glycan biosynthesis; hyaluronan biosynthesis. In terms of biological role, catalyzes the addition of GlcNAc or GlcUA monosaccharides to the nascent hyaluronan polymer. Therefore, it is essential to hyaluronan synthesis a major component of most extracellular matrices that has a structural role in tissues architectures and regulates cell adhesion, migration and differentiation. This is one of three isoenzymes responsible for cellular hyaluronan synthesis and it is particularly responsible for the synthesis of high molecular mass hyaluronan. This chain is Hyaluronan synthase 2 (Has2), found in Rattus norvegicus (Rat).